Reading from the N-terminus, the 920-residue chain is Alpha-L-rhamnosidase (920 aa).

The first 19 residues, 1–19 (MCVVRTFWFAVLTVIFAVS), serve as a signal peptide directing secretion. Cys-20 carries N-palmitoyl cysteine lipidation. Cys-20 carries S-diacylglycerol cysteine lipidation. Alpha-L-rhamnose contacts are provided by residues Asp-500, 504 to 506 (RDE), Asp-513, and Trp-565. The active-site Proton donor is Glu-506. Glu-779 (proton acceptor) is an active-site residue. His-800 provides a ligand contact to alpha-L-rhamnose.

This sequence belongs to the glycosyl hydrolase 78 family.

It is found in the cell membrane. The catalysed reaction is Hydrolysis of terminal non-reducing alpha-L-rhamnose residues in alpha-L-rhamnosides.. Alpha-L-rhamnosidase involved in ulvan degradation. Ulvan is the main polysaccharide component of the Ulvales (green seaweed) cell wall. It is composed of disaccharide building blocks comprising 3-sulfated rhamnose (Rha3S) linked to D-glucuronic acid (GlcA), L-iduronic acid (IduA), or D-xylose (Xyl). The enzyme is able to degrade p-nitrophenyl-alpha-L-rhamnopyranoside (PNP-Rha) in vitro. Incubating the enzyme with the products obtained after degradation with ulvan lyase and beta-glucuronyl hydrolase (i.e. the trisaccharides beta-alpha-L-Rha3S-IduA-Rha3S and beta-alpha-L-Rha3S-GlcA-Rha3S) showed no degradation, suggesting that the enzyme is active on neutral rhamnose and that desulfation of the oligosaccharide must be achieved before cleavage of rhamnose. The sequence is that of Alpha-L-rhamnosidase from Alteromonas sp. (strain LOR).